Consider the following 224-residue polypeptide: N-(5'-phosphoribosyl)anthranilate isomerase (224 aa).

The protein belongs to the TrpF family.

The catalysed reaction is N-(5-phospho-beta-D-ribosyl)anthranilate = 1-(2-carboxyphenylamino)-1-deoxy-D-ribulose 5-phosphate. It functions in the pathway amino-acid biosynthesis; L-tryptophan biosynthesis; L-tryptophan from chorismate: step 3/5. This is N-(5'-phosphoribosyl)anthranilate isomerase from Sinorhizobium fredii (strain NBRC 101917 / NGR234).